Consider the following 264-residue polypeptide: Thiazole synthase (264 aa).

Lysine 104 functions as the Schiff-base intermediate with DXP in the catalytic mechanism. 1-deoxy-D-xylulose 5-phosphate contacts are provided by residues glycine 165, 191-192 (AG), and 213-214 (NT).

It belongs to the ThiG family. Homotetramer. Forms heterodimers with either ThiH or ThiS.

The protein localises to the cytoplasm. It carries out the reaction [ThiS sulfur-carrier protein]-C-terminal-Gly-aminoethanethioate + 2-iminoacetate + 1-deoxy-D-xylulose 5-phosphate = [ThiS sulfur-carrier protein]-C-terminal Gly-Gly + 2-[(2R,5Z)-2-carboxy-4-methylthiazol-5(2H)-ylidene]ethyl phosphate + 2 H2O + H(+). It functions in the pathway cofactor biosynthesis; thiamine diphosphate biosynthesis. In terms of biological role, catalyzes the rearrangement of 1-deoxy-D-xylulose 5-phosphate (DXP) to produce the thiazole phosphate moiety of thiamine. Sulfur is provided by the thiocarboxylate moiety of the carrier protein ThiS. In vitro, sulfur can be provided by H(2)S. This Oleidesulfovibrio alaskensis (strain ATCC BAA-1058 / DSM 17464 / G20) (Desulfovibrio alaskensis) protein is Thiazole synthase.